Consider the following 593-residue polypeptide: NADH-quinone oxidoreductase subunit C/D (593 aa).

An NADH dehydrogenase I subunit C region spans residues 1–184 (MTADNAIFIP…DPYSLTLAKQ (184 aa)). The segment at 208–593 (DYMFLNLGPN…IDFVMADVDR (386 aa)) is NADH dehydrogenase I subunit D.

The protein in the N-terminal section; belongs to the complex I 30 kDa subunit family. In the C-terminal section; belongs to the complex I 49 kDa subunit family. As to quaternary structure, NDH-1 is composed of 13 different subunits. Subunits NuoB, CD, E, F, and G constitute the peripheral sector of the complex.

It is found in the cell inner membrane. It carries out the reaction a quinone + NADH + 5 H(+)(in) = a quinol + NAD(+) + 4 H(+)(out). In terms of biological role, NDH-1 shuttles electrons from NADH, via FMN and iron-sulfur (Fe-S) centers, to quinones in the respiratory chain. The immediate electron acceptor for the enzyme in this species is believed to be ubiquinone. Couples the redox reaction to proton translocation (for every two electrons transferred, four hydrogen ions are translocated across the cytoplasmic membrane), and thus conserves the redox energy in a proton gradient. This Pseudomonas putida (strain ATCC 700007 / DSM 6899 / JCM 31910 / BCRC 17059 / LMG 24140 / F1) protein is NADH-quinone oxidoreductase subunit C/D.